We begin with the raw amino-acid sequence, 486 residues long: ATP-dependent rRNA helicase RRP3 (486 aa).

Over residues 1 to 11 (MSKVTKQSKSH) the composition is skewed to basic residues. The segment at 1–52 (MSKVTKQSKSHKSSELVSLAEKIKQKALENRKQSREESQATEEANTASETEA) is disordered. The stretch at 17 to 49 (VSLAEKIKQKALENRKQSREESQATEEANTASE) forms a coiled coil. A compositionally biased stretch (basic and acidic residues) spans 21–38 (EKIKQKALENRKQSREES). Over residues 41-52 (TEEANTASETEA) the composition is skewed to low complexity. Residues 66–94 (SSFRELDLVPELIEACDNLNFTKPTPIQS) carry the Q motif motif. Residues 97–269 (IPPALQGKDI…RASLTNPVKC (173 aa)) enclose the Helicase ATP-binding domain. 110–117 (AQTGSGKT) serves as a coordination point for ATP. Positions 216–219 (DEAD) match the DEAD box motif. Residues 300–446 (LLNEFIGKTT…SIVLSLRDSV (147 aa)) enclose the Helicase C-terminal domain. Residues 459-486 (RRNKEKQTRGKGRRSRTATRENMDKEEE) are disordered. A compositionally biased stretch (basic and acidic residues) spans 476 to 486 (ATRENMDKEEE).

The protein belongs to the DEAD box helicase family. DDX47/RRP3 subfamily. As to quaternary structure, interacts with the SSU processome.

It is found in the nucleus. The enzyme catalyses ATP + H2O = ADP + phosphate + H(+). ATP-dependent rRNA helicase required for pre-ribosomal RNA processing. Involved in the maturation of the 35S-pre-rRNA and to its cleavage to mature 18S rRNA. The protein is ATP-dependent rRNA helicase RRP3 of Eremothecium gossypii (strain ATCC 10895 / CBS 109.51 / FGSC 9923 / NRRL Y-1056) (Yeast).